Consider the following 975-residue polypeptide: FHF complex subunit HOOK-interacting protein 1B (975 aa).

The segment at 465–496 (APSPPRPEHASWARGPGSPSVDSSSVVTVPRP) is disordered. Position 467 is a phosphoserine (Ser-467). The segment covering 482–496 (SPSVDSSSVVTVPRP) has biased composition (low complexity). Phosphoserine occurs at positions 510, 523, 529, and 533. Disordered regions lie at residues 511 to 548 (LGGS…GELE), 573 to 621 (SAPY…GLAV), and 690 to 717 (SNGG…SFTC). A compositionally biased stretch (low complexity) spans 527-538 (TASPTSSPSRRP). Positions 597 to 608 (LLPEEDRDNVRE) are enriched in basic and acidic residues. The residue at position 863 (Ser-863) is a Phosphoserine. Thr-892 carries the post-translational modification Phosphothreonine. Ser-900 carries the post-translational modification Phosphoserine.

This sequence belongs to the FHIP family. As to quaternary structure, component of the FTS/Hook/FHIP complex (FHF complex), composed of AKTIP/FTS, FHIP1B, and one or more members of the Hook family of proteins HOOK1, HOOK2, and HOOK3. The FHF complex associates with the homotypic vesicular sorting complex (the HOPS complex).

Component of the FTS/Hook/FHIP complex (FHF complex). The FHF complex may function to promote vesicle trafficking and/or fusion via the homotypic vesicular protein sorting complex (the HOPS complex). FHF complex promotes the distribution of AP-4 complex to the perinuclear area of the cell. This chain is FHF complex subunit HOOK-interacting protein 1B, found in Mus musculus (Mouse).